Consider the following 254-residue polypeptide: Segregation and condensation protein A (254 aa).

It belongs to the ScpA family. Component of a cohesin-like complex composed of ScpA, ScpB and the Smc homodimer, in which ScpA and ScpB bind to the head domain of Smc. The presence of the three proteins is required for the association of the complex with DNA.

The protein localises to the cytoplasm. In terms of biological role, participates in chromosomal partition during cell division. May act via the formation of a condensin-like complex containing Smc and ScpB that pull DNA away from mid-cell into both cell halves. This Brevibacillus brevis (strain 47 / JCM 6285 / NBRC 100599) protein is Segregation and condensation protein A.